The following is a 381-amino-acid chain: Chaperone protein DnaJ (381 aa).

Residues 5–70 (DYYEVLGLQK…QKRAAYDQYG (66 aa)) enclose the J domain. A CR-type zinc finger spans residues 133 to 211 (GTTKDIQINT…CHGEGRVHKK (79 aa)). Residues cysteine 146, cysteine 149, cysteine 163, cysteine 166, cysteine 185, cysteine 188, cysteine 199, and cysteine 202 each coordinate Zn(2+). 4 CXXCXGXG motif repeats span residues 146-153 (CDSCGGSG), 163-170 (CPHCHGSG), 185-192 (CPTCHGSG), and 199-206 (CRSCHGEG).

The protein belongs to the DnaJ family. In terms of assembly, homodimer. Requires Zn(2+) as cofactor.

The protein localises to the cytoplasm. Participates actively in the response to hyperosmotic and heat shock by preventing the aggregation of stress-denatured proteins and by disaggregating proteins, also in an autonomous, DnaK-independent fashion. Unfolded proteins bind initially to DnaJ; upon interaction with the DnaJ-bound protein, DnaK hydrolyzes its bound ATP, resulting in the formation of a stable complex. GrpE releases ADP from DnaK; ATP binding to DnaK triggers the release of the substrate protein, thus completing the reaction cycle. Several rounds of ATP-dependent interactions between DnaJ, DnaK and GrpE are required for fully efficient folding. Also involved, together with DnaK and GrpE, in the DNA replication of plasmids through activation of initiation proteins. This is Chaperone protein DnaJ from Haemophilus influenzae (strain 86-028NP).